The chain runs to 87 residues: U15-lycotoxin-Ls1f (87 aa).

Positions 1 to 20 (MNSKIFAVLLLLGLLSCVLS) are cleaved as a signal peptide. The WAP domain occupies 21–66 (DQYCPKSSITACKKMNIRNDCCKDDDCTGGSWCCATPCGNFCKYPT). 5 disulfide bridges follow: Cys24–Cys54, Cys32–Cys58, Cys41–Cys53, Cys42–Cys80, and Cys47–Cys62.

It belongs to the venom protein 11 family. 01 (wap-1) subfamily. Contains 5 disulfide bonds. Expressed by the venom gland.

Its subcellular location is the secreted. Its function is as follows. Has antibacterial activity. This is U15-lycotoxin-Ls1f from Lycosa singoriensis (Wolf spider).